The sequence spans 198 residues: MQLSNFLSIWALVAMGATAAPMPSGSAPGNPFADGEAYGARPSQGLTPVPKVHDGSYHSCETCAAPFRTEERLAAHRQADHGNQGAAARGSGRHTSKNRGSSKTSERERLDRLASRVGEDYVEKRSQEATEEQEQGHVKPGRSKKEIAQRIRNLPVTPWNQYGAAVKLDKPTRKEQYRQLPGNDRLTPFEEQGDPVQL.

The signal sequence occupies residues 1–19 (MQLSNFLSIWALVAMGATA). Disordered stretches follow at residues 21-59 (PMPS…SYHS) and 71-198 (ERLA…PVQL). A C2H2-type zinc finger spans residues 58–81 (HSCETCAAPFRTEERLAAHRQADH). Composition is skewed to basic and acidic residues over residues 71–80 (ERLAAHRQAD), 104–128 (TSER…RSQE), and 167–177 (KLDKPTRKEQY).

It is found in the secreted. Its subcellular location is the host nucleus. In terms of biological role, secreted effector that translocates into the nuclei of host cells to reprogram the expression of immunity-associated genes by binding to effector binding elements (EBEs) in rice. Binds the 5'-CAATCTTC-3' EBE of promoters from targeted rice genes and probably recruits a yet to be determined host repressor. Causes ambivalent immunity with increased susceptibility to the hemibiotrophic pathogens Magnaporthe oryzae and Xanthomonas oryzae pv. oryzae, but enhances resistance to Cochliobolus miyabeanus, a necrotrophic pathogen. This chain is Host transcription reprogramming factor 1, found in Pyricularia oryzae (strain 70-15 / ATCC MYA-4617 / FGSC 8958) (Rice blast fungus).